We begin with the raw amino-acid sequence, 118 residues long: Large ribosomal subunit protein bL20 (118 aa).

Belongs to the bacterial ribosomal protein bL20 family.

Its function is as follows. Binds directly to 23S ribosomal RNA and is necessary for the in vitro assembly process of the 50S ribosomal subunit. It is not involved in the protein synthesizing functions of that subunit. In Lactobacillus acidophilus (strain ATCC 700396 / NCK56 / N2 / NCFM), this protein is Large ribosomal subunit protein bL20.